Here is a 354-residue protein sequence, read N- to C-terminus: UDP-N-acetylglucosamine--N-acetylmuramyl-(pentapeptide) pyrophosphoryl-undecaprenol N-acetylglucosamine transferase 1 (354 aa).

UDP-N-acetyl-alpha-D-glucosamine contacts are provided by residues 12–14 (TAG), Arg163, Ser193, and Gln287.

It belongs to the glycosyltransferase 28 family. MurG subfamily.

The protein localises to the cell membrane. It catalyses the reaction di-trans,octa-cis-undecaprenyl diphospho-N-acetyl-alpha-D-muramoyl-L-alanyl-D-glutamyl-meso-2,6-diaminopimeloyl-D-alanyl-D-alanine + UDP-N-acetyl-alpha-D-glucosamine = di-trans,octa-cis-undecaprenyl diphospho-[N-acetyl-alpha-D-glucosaminyl-(1-&gt;4)]-N-acetyl-alpha-D-muramoyl-L-alanyl-D-glutamyl-meso-2,6-diaminopimeloyl-D-alanyl-D-alanine + UDP + H(+). It functions in the pathway cell wall biogenesis; peptidoglycan biosynthesis. Functionally, cell wall formation. Catalyzes the transfer of a GlcNAc subunit on undecaprenyl-pyrophosphoryl-MurNAc-pentapeptide (lipid intermediate I) to form undecaprenyl-pyrophosphoryl-MurNAc-(pentapeptide)GlcNAc (lipid intermediate II). The sequence is that of UDP-N-acetylglucosamine--N-acetylmuramyl-(pentapeptide) pyrophosphoryl-undecaprenol N-acetylglucosamine transferase 1 from Bacillus thuringiensis (strain Al Hakam).